The chain runs to 366 residues: HTH-type transcriptional regulator MSMEG_6044/MSMEI_5883 (366 aa).

The 56-residue stretch at 11–66 (ATLASLAAELKVSRTTISNAYNRPDQLSADLRERIFDAAKRLGYPGPDPVARSLRT) folds into the HTH lacI-type domain. A DNA-binding region (H-T-H motif) is located at residues 13–32 (LASLAAELKVSRTTISNAYN).

In terms of biological role, transcriptional regulator that negatively regulates transcription of the mce4 operon, which is involved in cholesterol transport and utilization. Acts by binding to the promoter region of the mce4 operon. This chain is HTH-type transcriptional regulator MSMEG_6044/MSMEI_5883, found in Mycolicibacterium smegmatis (strain ATCC 700084 / mc(2)155) (Mycobacterium smegmatis).